Reading from the N-terminus, the 404-residue chain is Ubiquitin-like modifier-activating enzyme 5 (404 aa).

Ser-45 is modified (phosphoserine). Positions 83, 104, 127, 150, and 184 each coordinate ATP. Zn(2+)-binding residues include Cys-226 and Cys-229. The active-site Glycyl thioester intermediate is the Cys-250. Zn(2+) contacts are provided by Cys-303 and Cys-308. Residues 334–346 carry the UFM1-interacting sequence (UIS) motif; sequence IIHEDNEWGIELV. Residues 347 to 377 form a linker region; the sequence is SEVSEEELKNFSGPVPDLPEGITVAYTIPKK. Ser-358 and Ser-393 each carry phosphoserine. Residues 389–404 carry the UFC1-binding sequence (UFC) motif; that stretch reads DSGESLEDLMAKMKNM.

Belongs to the ubiquitin-activating E1 family. UBA5 subfamily. Homodimer; homodimerization is required for UFM1 activation. Interacts (via UIS motif) with UFM1; binds UFM1 via a trans-binding mechanism in which UFM1 interacts with distinct sites in both subunits of the UBA5 homodimer. Interacts (via C-terminus) with UFC1. Interacts (via UIS motif) with GABARAPL2 and, with lower affinity, with GABARAP and GABARAPL1. In terms of tissue distribution, widely expressed.

The protein resides in the cytoplasm. Its subcellular location is the nucleus. The protein localises to the endoplasmic reticulum membrane. It localises to the golgi apparatus. Functionally, E1-like enzyme which specifically catalyzes the first step in ufmylation. Activates UFM1 by first adenylating its C-terminal glycine residue with ATP, and thereafter linking this residue to the side chain of a cysteine residue in E1, yielding a UFM1-E1 thioester and free AMP. Activates UFM1 via a trans-binding mechanism, in which UFM1 interacts with distinct sites in both subunits of the UBA5 homodimer. Trans-binding also promotes stabilization of the UBA5 homodimer, and enhances ATP-binding. Transfer of UFM1 from UBA5 to the E2-like enzyme UFC1 also takes place using a trans mechanism. Ufmylation plays a key role in various processes, such as ribosome recycling, response to DNA damage, interferon response or reticulophagy (also called ER-phagy). Ufmylation is essential for erythroid differentiation of both megakaryocytes and erythrocytes. In Homo sapiens (Human), this protein is Ubiquitin-like modifier-activating enzyme 5.